Reading from the N-terminus, the 313-residue chain is Transcription initiation factor IIB 2 (313 aa).

A TFIIB-type zinc finger spans residues 13-44 (APKRCPECHSEHLIRDYEHGELICADCGAVIE). Zn(2+) contacts are provided by Cys17, Cys20, Cys36, and Cys39. 2 repeat units span residues 130 to 213 (QLLN…AKEL) and 224 to 305 (SYIA…EISK).

It belongs to the TFIIB family.

In terms of biological role, stabilizes TBP binding to an archaeal box-A promoter. Also responsible for recruiting RNA polymerase II to the pre-initiation complex (DNA-TBP-TFIIB). The polypeptide is Transcription initiation factor IIB 2 (Thermoplasma volcanium (strain ATCC 51530 / DSM 4299 / JCM 9571 / NBRC 15438 / GSS1)).